A 224-amino-acid chain; its full sequence is Perchlorate reductase assembly chaperone protein (224 aa).

It belongs to the type II DMSO reductase enzyme chaperone family.

The protein resides in the cytoplasm. In terms of biological role, may function as a system-specific molybdenum chaperone protein essential for the assembly of the perchlorate reductase PcrAB complex prior to its periplasmic translocation via the Tat pathway. This Dechloromonas aromatica (strain RCB) protein is Perchlorate reductase assembly chaperone protein (pcrD).